The following is a 160-amino-acid chain: Succinate dehydrogenase assembly factor 2-B, mitochondrial (160 aa).

A mitochondrion-targeting transit peptide spans 1–23 (MLRQLKLTLNISRWIFMPWQRHA).

This sequence belongs to the SDHAF2 family. In terms of assembly, interacts with the flavoprotein subunit within the SDH catalytic dimer.

It localises to the mitochondrion matrix. Functionally, plays an essential role in the assembly of succinate dehydrogenase (SDH), an enzyme complex (also referred to as respiratory complex II) that is a component of both the tricarboxylic acid (TCA) cycle and the mitochondrial electron transport chain, and which couples the oxidation of succinate to fumarate with the reduction of ubiquinone (coenzyme Q) to ubiquinol. Required for flavinylation (covalent attachment of FAD) of the flavoprotein subunit of the SDH catalytic dimer. The polypeptide is Succinate dehydrogenase assembly factor 2-B, mitochondrial (Drosophila pseudoobscura pseudoobscura (Fruit fly)).